The following is a 273-amino-acid chain: NADPH-dependent 7-cyano-7-deazaguanine reductase (273 aa).

Residue 81–83 (VES) coordinates substrate. 83 to 84 (SK) is an NADPH binding site. Cysteine 179 serves as the catalytic Thioimide intermediate. Aspartate 186 functions as the Proton donor in the catalytic mechanism. 218 to 219 (AE) serves as a coordination point for substrate. 247 to 248 (RG) contacts NADPH.

The protein belongs to the GTP cyclohydrolase I family. QueF type 2 subfamily. As to quaternary structure, homodimer.

Its subcellular location is the cytoplasm. It catalyses the reaction 7-aminomethyl-7-carbaguanine + 2 NADP(+) = 7-cyano-7-deazaguanine + 2 NADPH + 3 H(+). It participates in tRNA modification; tRNA-queuosine biosynthesis. Catalyzes the NADPH-dependent reduction of 7-cyano-7-deazaguanine (preQ0) to 7-aminomethyl-7-deazaguanine (preQ1). In Rickettsia canadensis (strain McKiel), this protein is NADPH-dependent 7-cyano-7-deazaguanine reductase.